Reading from the N-terminus, the 181-residue chain is Major urinary protein 20 (181 aa).

The signal sequence occupies residues 1–19; it reads MKLLVLLLCLGLTLVCVHA. Cys-83 and Cys-176 are joined by a disulfide.

The protein belongs to the calycin superfamily. Lipocalin family. As to expression, detected in urine of males but absent from female urine (at protein level).

Its subcellular location is the secreted. Its function is as follows. Male pheromone which stimulates female sexual attraction to male urinary scent and promotes a strong learned attraction to the airborne urinary odor of an individual male. Promotes spatial learning by rapidly conditioning preference for its remembered location among females and competitor males so that animals prefer to spend time in the site even when scent is absent. In addition to promoting a rapid attraction response, also elicits ultrasonic vocalizations and urinary scent marking in females which do not occur immediately after exposure. Stimulates hippocampal neurogenesis and cell proliferation in the subventricular zone in females. Promotes male aggressive behavior. Response to Mup20 is mediated by a neural circuit extending from the accessory olfactory bulb to a subset of nitric oxidase synthase-expressing neurons in the medial amygdala. As well as acting as a pheromone itself, binds most of the male pheromone, 2-sec-butyl-4,5-dihydrothiazole, in urine and is responsible for its slow release from scent marks. The sequence is that of Major urinary protein 20 from Mus musculus (Mouse).